Here is a 213-residue protein sequence, read N- to C-terminus: Eukaryotic translation initiation factor 4E (213 aa).

A phosphoserine; by CK2 mark is found at S2 and S15. The residue at position 22 (T22) is a Phosphothreonine. A phosphoserine mark is found at S28 and S30. A Glycyl lysine isopeptide (Lys-Gly) (interchain with G-Cter in ubiquitin) cross-link involves residue K114.

It belongs to the eukaryotic initiation factor 4E family. Component of the eIF4F complex, which composition varies with external and internal environmental conditions. It is composed of at least eIF4A (TIF1/TIF2), eIF4E (TIF45) and eIF4G (TIF4631 or TIF4632). Interacts with PAT1 in a RNA-dependent manner. eIF4E is also known to interact with other partners.

The protein resides in the cytoplasm. Its subcellular location is the nucleus. In terms of biological role, recognizes and binds the 7-methylguanosine (m7G)-containing mRNA cap during an early step in the initiation of protein synthesis and facilitates ribosome binding by inducing the unwinding of the mRNAs secondary structures. The sequence is that of Eukaryotic translation initiation factor 4E (CDC33) from Saccharomyces cerevisiae (strain ATCC 204508 / S288c) (Baker's yeast).